We begin with the raw amino-acid sequence, 425 residues long: Histidine--tRNA ligase (425 aa).

This sequence belongs to the class-II aminoacyl-tRNA synthetase family. As to quaternary structure, homodimer.

It is found in the cytoplasm. The enzyme catalyses tRNA(His) + L-histidine + ATP = L-histidyl-tRNA(His) + AMP + diphosphate + H(+). In Shewanella sp. (strain MR-4), this protein is Histidine--tRNA ligase.